A 403-amino-acid polypeptide reads, in one-letter code: Tryptophan synthase beta chain (403 aa).

Lys88 carries the post-translational modification N6-(pyridoxal phosphate)lysine.

This sequence belongs to the TrpB family. As to quaternary structure, tetramer of two alpha and two beta chains. Pyridoxal 5'-phosphate is required as a cofactor.

It carries out the reaction (1S,2R)-1-C-(indol-3-yl)glycerol 3-phosphate + L-serine = D-glyceraldehyde 3-phosphate + L-tryptophan + H2O. The protein operates within amino-acid biosynthesis; L-tryptophan biosynthesis; L-tryptophan from chorismate: step 5/5. In terms of biological role, the beta subunit is responsible for the synthesis of L-tryptophan from indole and L-serine. The sequence is that of Tryptophan synthase beta chain from Shewanella frigidimarina (strain NCIMB 400).